A 453-amino-acid polypeptide reads, in one-letter code: MDQTMTQASDKEASVADKLQYMPGFGNDFETETLPGALPQGQNSPQKCNYGLYAEQLSGSPFTAPRGTNERSWLYRIRPSVRHTRRFSNASYPHWKSAPCLDDHSLPLGQLRWGPMPVPDEKLSFLDGVRTMTTAGDVLTQTGMAAHVYVFNEDMVDDYAFNADGELLIVPQVGAIRVFTEMGIMDVEPLEIVLIPRGMMFKVLRKGDEKVWRGYICENYGAKFTLPDRGPIGANCLANPRDFKTPVAAYEDKEAPCRVHVKWCGKFYVTEIGHSPLDVVAWHGNYAPFKYDLRTFSPVGAILFDHPDPSIFTVLTAPTESAGTANVDFVIFPPRWLVAEHTFRPPWYHRNIMSEFMGLIHGQYDAKEEGFVPGGISLHNMMLPHGPDASGFEKASNSELKPVKLDHTMAFMFETRYPQQVTKYAAELETLQDNYLECWDGLERRFDGTPGIK.

The Proton acceptor role is filled by histidine 306. Fe cation contacts are provided by histidine 349 and glutamate 355. Homogentisate is bound by residues tyrosine 364 and histidine 385. A Fe cation-binding site is contributed by histidine 385.

It belongs to the homogentisate dioxygenase family. In terms of assembly, hexamer; dimer of trimers. It depends on Fe cation as a cofactor.

It catalyses the reaction homogentisate + O2 = 4-maleylacetoacetate + H(+). It functions in the pathway amino-acid degradation; L-phenylalanine degradation; acetoacetate and fumarate from L-phenylalanine: step 4/6. Its function is as follows. Involved in the catabolism of homogentisate (2,5-dihydroxyphenylacetate or 2,5-OH-PhAc), a central intermediate in the degradation of phenylalanine and tyrosine. Catalyzes the oxidative ring cleavage of the aromatic ring of homogentisate to yield maleylacetoacetate. This is Homogentisate 1,2-dioxygenase from Rhizobium rhizogenes (strain K84 / ATCC BAA-868) (Agrobacterium radiobacter).